The primary structure comprises 315 residues: Tetraacyldisaccharide 4'-kinase (315 aa).

52-59 (TVGGTGKT) lines the ATP pocket.

Belongs to the LpxK family.

The enzyme catalyses a lipid A disaccharide + ATP = a lipid IVA + ADP + H(+). The protein operates within glycolipid biosynthesis; lipid IV(A) biosynthesis; lipid IV(A) from (3R)-3-hydroxytetradecanoyl-[acyl-carrier-protein] and UDP-N-acetyl-alpha-D-glucosamine: step 6/6. Its function is as follows. Transfers the gamma-phosphate of ATP to the 4'-position of a tetraacyldisaccharide 1-phosphate intermediate (termed DS-1-P) to form tetraacyldisaccharide 1,4'-bis-phosphate (lipid IVA). This is Tetraacyldisaccharide 4'-kinase from Ruthia magnifica subsp. Calyptogena magnifica.